The following is a 138-amino-acid chain: Nucleoside diphosphate kinase (138 aa).

K9, F57, R85, T91, R102, and N112 together coordinate ATP. Catalysis depends on H115, which acts as the Pros-phosphohistidine intermediate.

This sequence belongs to the NDK family. As to quaternary structure, homotetramer. The cofactor is Mg(2+).

It is found in the cytoplasm. The enzyme catalyses a 2'-deoxyribonucleoside 5'-diphosphate + ATP = a 2'-deoxyribonucleoside 5'-triphosphate + ADP. The catalysed reaction is a ribonucleoside 5'-diphosphate + ATP = a ribonucleoside 5'-triphosphate + ADP. Its function is as follows. Major role in the synthesis of nucleoside triphosphates other than ATP. The ATP gamma phosphate is transferred to the NDP beta phosphate via a ping-pong mechanism, using a phosphorylated active-site intermediate. This chain is Nucleoside diphosphate kinase, found in Desulfatibacillum aliphaticivorans.